The sequence spans 284 residues: Type II methyltransferase M1.DpnII (284 aa).

Residues Trp-17, Lys-21, Gly-46, Asp-62, Asp-177, Phe-178, and Asp-194 each contribute to the S-adenosyl-L-methionine site.

Belongs to the N(4)/N(6)-methyltransferase family. Monomer. Homodimer.

The enzyme catalyses a 2'-deoxyadenosine in DNA + S-adenosyl-L-methionine = an N(6)-methyl-2'-deoxyadenosine in DNA + S-adenosyl-L-homocysteine + H(+). In terms of biological role, an alpha subtype methylase that recognizes the double-stranded sequence 5'-GATC-3', methylates A-2 on both strands, and protects the DNA from cleavage by the DpnII endonuclease. The polypeptide is Type II methyltransferase M1.DpnII (Streptococcus pneumoniae).